The sequence spans 448 residues: Probable protein phosphatase 2C 74 (448 aa).

Positions 1–48 (MGSCLSSSGGGGSRRSLHGSPHVPGPGRRKRPPKRRPGSCSSSFDNTE) are disordered. Glycine 2 carries N-myristoyl glycine lipidation. The segment covering 27-37 (GRRKRPPKRRP) has biased composition (basic residues). Residues 67-384 (TVSLFSQQGK…DDCAVVCLFL (318 aa)) enclose the PPM-type phosphatase domain. Mn(2+) is bound by residues aspartate 103, glycine 104, aspartate 329, and aspartate 375. The disordered stretch occupies residues 401 to 431 (HINNGVTEPEPDTASSSTPDSGTGSPELNGV). Residues 412–426 (DTASSSTPDSGTGSP) show a composition bias toward low complexity.

It belongs to the PP2C family. Interacts with KIN10. It depends on Mg(2+) as a cofactor. Mn(2+) serves as cofactor. Expressed in the whole plant.

The protein resides in the cell membrane. It catalyses the reaction O-phospho-L-seryl-[protein] + H2O = L-seryl-[protein] + phosphate. It carries out the reaction O-phospho-L-threonyl-[protein] + H2O = L-threonyl-[protein] + phosphate. Its function is as follows. Acts as a protein phosphatase. This chain is Probable protein phosphatase 2C 74, found in Arabidopsis thaliana (Mouse-ear cress).